Here is a 228-residue protein sequence, read N- to C-terminus: MDHGRLMDDQMMLGSQVYPYTTQPQNSHCIIVNQIDGGEESKPVKRRRKRRSKGSSATNEEDVAEIGGMLRKRKLTDEQVNMLEYSFGNEHKLESGRKEKIAGELGLDPRQVAVWFQNRRARWKNKKLEEEYAKLKNHHDNVVLGQCQLESQILKLTEQLSEAQSEIRKLSERLEEMPTNSSSSSLSVEANNAPTDFELAPETNYNIPFYMLDNNYLQSMEYWDGLYV.

The tract at residues 36–62 (DGGEESKPVKRRRKRRSKGSSATNEED) is disordered. The segment covering 44 to 53 (VKRRRKRRSK) has biased composition (basic residues). The homeobox DNA-binding region spans 68-127 (GMLRKRKLTDEQVNMLEYSFGNEHKLESGRKEKIAGELGLDPRQVAVWFQNRRARWKNKK). Residues 128–156 (LEEEYAKLKNHHDNVVLGQCQLESQILKL) are leucine-zipper.

It belongs to the HD-ZIP homeobox family. Class I subfamily. Expressed in root meristem, late flowers and siliques.

It is found in the nucleus. In terms of biological role, probable transcription factor that may play a regulatory role in auxin/cytokinin signaling during root development. The chain is Homeobox-leucine zipper protein ATHB-53 (ATHB-53) from Arabidopsis thaliana (Mouse-ear cress).